A 736-amino-acid chain; its full sequence is Myosin-7 (736 aa).

The Myosin motor domain occupies 1-342 (NWMVTRINAT…LLGLLEEMRD (342 aa)). The tract at residues 219–241 (LNKLMTNLRSTHPHFVRCIIPNE) is actin-binding. Residues 345–374 (LSRIITRIQAQSRGVLSRMEYKKLLERRDS) form the IQ domain. Residues 403-736 (LLKSAETEKE…MNKKREAEFQ (334 aa)) adopt a coiled-coil conformation. Ser-701 is subject to Phosphoserine. The tract at residues 716–736 (EAGGATSVQIEMNKKREAEFQ) is disordered. Residues 727-736 (MNKKREAEFQ) show a composition bias toward basic and acidic residues.

It belongs to the TRAFAC class myosin-kinesin ATPase superfamily. Myosin family. As to quaternary structure, muscle myosin is a hexameric protein that consists of 2 heavy chain subunits (MHC), 2 alkali light chain subunits (MLC) and 2 regulatory light chain subunits (MLC-2). Interacts with ECPAS. Interacts (via C-terminus) with LRRC39.

Its subcellular location is the cytoplasm. The protein resides in the myofibril. The protein localises to the sarcomere. Its function is as follows. Myosins are actin-based motor molecules with ATPase activity essential for muscle contraction. Forms regular bipolar thick filaments that, together with actin thin filaments, constitute the fundamental contractile unit of skeletal and cardiac muscle. The protein is Myosin-7 (MYH7) of Oryctolagus cuniculus (Rabbit).